Consider the following 521-residue polypeptide: Matrix metalloproteinase-A (521 aa).

The first 21 residues, 1–21 (MFTGLHDILIILFLLVTLKIA), serve as a signal peptide directing secretion. Residues 22–95 (QNVDHTKFLQ…EDHQKSRGKR (74 aa)) constitute a propeptide, activation peptide. The short motif at 78–85 (PRCGHPDV) is the Cysteine switch element. Cys80 contacts Zn(2+). Residues 96-500 (YAPPQFKWKE…FCPRNEKLVL (405 aa)) lie on the Extracellular side of the membrane. Asn199 carries an N-linked (GlcNAc...) asparagine glycan. His215 serves as a coordination point for Zn(2+). The active site involves Glu216. Positions 219 and 225 each coordinate Zn(2+). The tract at residues 259 to 298 (KASKKENEEEERKTENEDKRRKTEKDRGRTREHESDDIRP) is disordered. The span at 261–298 (SKKENEEEERKTENEDKRRKTEKDRGRTREHESDDIRP) shows a compositional bias: basic and acidic residues. 3 Hemopexin repeats span residues 300 to 347 (ECRV…FPGL), 391 to 443 (EKYV…WARV), and 444 to 492 (PKGV…FGFC). N-linked (GlcNAc...) asparagine glycosylation occurs at Asn469. A helical transmembrane segment spans residues 501-521 (NSSSSHFSLIYATITILILIF).

This sequence belongs to the peptidase M10A family. Zn(2+) serves as cofactor. In terms of tissue distribution, expressed in the anchor cell. Expressed in the anchor cell throughout the L3 and the early L4 stage, but not in vulva precursor cells P6.p, P6.px, or P6.pxx. Expression in P6.pxxx cells begins in late-L4 stage. During L4 lethargus, expressed in all four vulE cells, but not in vulF cells. The expression in vulE cells persists in adulthood. In males, expressed in the linker cell (LC) from the early L4 stage until LC death during the L4-to-adult molt.

Its subcellular location is the cell membrane. It is found in the basolateral cell membrane. Its function is as follows. Metalloprotease which, together with cadherin cdh-3 and hemicentin him-4, plays a role in anchor cell (AC) invasion during postembryonic vulval development probably by promoting the degradation of the basement membrane separating the gonad from the vulva epithelium. The polypeptide is Matrix metalloproteinase-A (Caenorhabditis elegans).